Consider the following 503-residue polypeptide: Xylan O-acetyltransferase 12 (503 aa).

Residues 1 to 54 (MWSALFSHLREVHKRSGVKEEKLIMKSPAAAGEAAGCHKPQATATNKMTVLQSP) are Cytoplasmic-facing. A helical; Signal-anchor for type II membrane protein membrane pass occupies residues 55-77 (LGLRTILTSLVAFFIVVSSVSLL). Residues 78-503 (FDRSQDAQAQ…EFLYAYLMHK (426 aa)) lie on the Lumenal side of the membrane. Intrachain disulfides connect Cys-153-Cys-204, Cys-175-Cys-240, Cys-184-Cys-484, and Cys-400-Cys-480. Asn-154, Asn-164, Asn-190, and Asn-210 each carry an N-linked (GlcNAc...) asparagine glycan. Positions 227–229 (GDS) match the GDS motif motif. Catalysis depends on Ser-229, which acts as the Nucleophile. N-linked (GlcNAc...) asparagine glycans are attached at residues Asn-256, Asn-268, Asn-373, Asn-402, and Asn-443. The active-site Proton donor is Asp-479. The DXXH motif motif lies at 479–482 (DCTH). The active-site Proton acceptor is the His-482.

This sequence belongs to the PC-esterase family. TBL subfamily.

It is found in the golgi apparatus membrane. Xylan acetyltransferase required for 2-O- and 3-O-monoacetylation of xylosyl residues in xylan. Catalyzes the 2-O-acetylation of xylan, followed by nonenzymatic acetyl migration to the O-3 position, resulting in products that are monoacetylated at both O-2 and O-3 positions. The chain is Xylan O-acetyltransferase 12 from Oryza sativa subsp. japonica (Rice).